A 914-amino-acid chain; its full sequence is MATTPDAAFEALMNGVTSWNLPKEPTPSELLLTGEAAFPVMVNDKDQVLIAASFYGHGRLVVLSHESYLLHAGLAPFLLNAVSWLCPSPEAPIAVHSSLASLVKILGDSGVNAVVQPEPREALGVYCIDAYSETLTETLIRFMKNGGGLLIGGQALTWAVHHGHEKVLSSFPGNQVTSVAGVYFTDISGNRDWFKVSKEIPNLTLYVQCEDELKYDQQQLLKGMSEMDIETGPVPSQLLVHGQRAFPLGVDNSFNCFLAAARFGRGRVVLAGHESLILNQTMLPFVLNALRWLMGNQTGRIGLASEMKALKSVLPNSSFEWSETELLTNDLSVFCSCSLGKTDPKKVEEFVAEGGGLLIGAEAWMWGRRNPDSNCMTQYPNNIILKRFGVGIISQVVQRGRFPVPNPEVINYHIRRALSQYESVIHSQGSSLQEGWLNKLSQDCFYMFQMTHQRISIYDSVKEHALKMIQSQGFPSVTEQHPITKGSSQAFLLSLAYELFKSGVDRSQLLPPPTLLSPTESPMTIKISTGNDNSWVSTGLYLPEGQVAQVTLPTEATHAKLKVLIGCHIDNISQAKTYIRPPVMTYVYHLTSSQTSISWLYGGLLYIMVPDKYNQDNVSVTISGAVSAPYFRLGKTTQEEWKNLIEHSKAPWGELATDNIILTIPTVNLKVLQDPYPLLQLWDKIVKAVAKLAARPFPFQRPERIVLDKQISFGFLHSGYPIMGLIIIVEGIINEFKIRSHGVWGVTHELGHNHQKPGWTFRPHTTEALCNLWSIYVHETVLNIPRDQAHPSLNPELRKQRIKDHLNKGAPLSNWIVWTALETYLQLQEGFGWEPFIQLFANYQTLTGLPQNNEDKMNLWVKKFSEVVQKNLAPFFKAWGWPVQHAVAKSLASLPEWQENPMKMYTAESTEHTE.

Residues asparagine 533–glycine 832 enclose the Peptidase M60 domain.

The protein belongs to the TCAF family.

May play a role in the regulation of the cation channel TRPM8 activity. This chain is TRPM8 channel-associated factor 3, found in Rattus norvegicus (Rat).